A 251-amino-acid chain; its full sequence is 1-(5-phosphoribosyl)-5-[(5-phosphoribosylamino)methylideneamino] imidazole-4-carboxamide isomerase (251 aa).

Residue Asp-8 is the Proton acceptor of the active site. Residue Asp-131 is the Proton donor of the active site.

Belongs to the HisA/HisF family.

It is found in the cytoplasm. It carries out the reaction 1-(5-phospho-beta-D-ribosyl)-5-[(5-phospho-beta-D-ribosylamino)methylideneamino]imidazole-4-carboxamide = 5-[(5-phospho-1-deoxy-D-ribulos-1-ylimino)methylamino]-1-(5-phospho-beta-D-ribosyl)imidazole-4-carboxamide. The protein operates within amino-acid biosynthesis; L-histidine biosynthesis; L-histidine from 5-phospho-alpha-D-ribose 1-diphosphate: step 4/9. In Burkholderia thailandensis (strain ATCC 700388 / DSM 13276 / CCUG 48851 / CIP 106301 / E264), this protein is 1-(5-phosphoribosyl)-5-[(5-phosphoribosylamino)methylideneamino] imidazole-4-carboxamide isomerase.